The following is a 250-amino-acid chain: Global transcriptional regulator CodY (250 aa).

The interval 1–147 (MSTLLEKTRK…GATVVGLEIL (147 aa)) is GAF domain. A DNA-binding region (H-T-H motif) is located at residues 195–214 (ASKIADKVGITRSVIVNALR).

The protein belongs to the CodY family.

The protein localises to the cytoplasm. In terms of biological role, DNA-binding global transcriptional regulator which is involved in the adaptive response to starvation and acts by directly or indirectly controlling the expression of numerous genes in response to nutrient availability. During rapid exponential growth, CodY is highly active and represses genes whose products allow adaptation to nutrient depletion. This Thermoanaerobacter sp. (strain X514) protein is Global transcriptional regulator CodY.